Here is a 104-residue protein sequence, read N- to C-terminus: Large ribosomal subunit protein bL21 (104 aa).

Belongs to the bacterial ribosomal protein bL21 family. As to quaternary structure, part of the 50S ribosomal subunit. Contacts protein L20.

In terms of biological role, this protein binds to 23S rRNA in the presence of protein L20. This chain is Large ribosomal subunit protein bL21, found in Elusimicrobium minutum (strain Pei191).